The primary structure comprises 184 residues: Lysozyme 1 (184 aa).

Residues 1-20 (MNGLILFCAVVFATAVCTYG) form the signal peptide. Positions 69 to 184 (TGMVSQQCLR…WRRVQAQGCN (116 aa)) constitute an I-type lysozyme domain. Disulfide bonds link Cys-76/Cys-152, Cys-81/Cys-87, Cys-92/Cys-101, Cys-114/Cys-134, Cys-124/Cys-130, and Cys-148/Cys-166. Residue Glu-84 is the Proton donor of the active site. Asp-95 acts as the Nucleophile in catalysis. Residue 107 to 113 (KRAYWID) participates in substrate binding. Substrate-binding positions include Tyr-138 and 159-161 (HNG).

As to expression, hemolymph, labial palps, non-vesiculated cells of mantle connective tissue, cells of interlamellar junctions and epithelia surrounding the water tubes of the gills.

It localises to the secreted. The catalysed reaction is Hydrolysis of (1-&gt;4)-beta-linkages between N-acetylmuramic acid and N-acetyl-D-glucosamine residues in a peptidoglycan and between N-acetyl-D-glucosamine residues in chitodextrins.. In terms of biological role, has antibacterial activity against the Gram-positive bacteria L.garvieae, M.luteus and Enterococcus sp., and the Gram-negative bacteria E.coli and V.vulnificus. Weak antibacterial activity against the Gram-negative bacterium A.hydrophila. No antibacterial activity detected against the Gram-positive bacterium S.iniae or against the Gram-negative bacterium E.ictaluri. Shows some chitinase activity but no isopeptidase activity. In Crassostrea virginica (Eastern oyster), this protein is Lysozyme 1.